The sequence spans 944 residues: Valine--tRNA ligase (944 aa).

A 'HIGH' region motif is present at residues 43 to 53 (PNVTGTLHMGH). Positions 550 to 554 (KMSKS) match the 'KMSKS' region motif. Lysine 553 serves as a coordination point for ATP. Residues 878 to 942 (LVDMDAERTR…QLTGLREQRA (65 aa)) are a coiled coil.

The protein belongs to the class-I aminoacyl-tRNA synthetase family. ValS type 1 subfamily. As to quaternary structure, monomer.

The protein localises to the cytoplasm. It carries out the reaction tRNA(Val) + L-valine + ATP = L-valyl-tRNA(Val) + AMP + diphosphate. Functionally, catalyzes the attachment of valine to tRNA(Val). As ValRS can inadvertently accommodate and process structurally similar amino acids such as threonine, to avoid such errors, it has a 'posttransfer' editing activity that hydrolyzes mischarged Thr-tRNA(Val) in a tRNA-dependent manner. This chain is Valine--tRNA ligase, found in Xanthomonas axonopodis pv. citri (strain 306).